The sequence spans 446 residues: sn-2 acyl-lipid omega-3 desaturase (ferredoxin), chloroplastic (446 aa).

A chloroplast-targeting transit peptide spans 1-65; that stretch reads MANLVLSECG…DGFTRNWALN (65 aa). 2 helical membrane passes run 118 to 138 and 141 to 161; these read LSYVVRDVAIVFALAAGAAYL and WIVWPLYWLAQGTMFWALFVL. The Histidine box-1 motif lies at 163–167; sequence HDCGH. Positions 199–203 match the Histidine box-2 motif; sequence HRTHH. 3 consecutive transmembrane segments (helical) span residues 231–250, 279–299, and 302–322; these read RFFRFTLPLVMLAYPFYLWA, TACWTAMAALLVCLNFTIGPI, and LKLYGIPYWINVMWLDFVTYL. The Histidine box-3 motif lies at 366–370; the sequence is HVIHH.

It belongs to the fatty acid desaturase type 1 family. Most abundant in leaves and seedlings.

The protein localises to the plastid. The protein resides in the chloroplast inner membrane. The enzyme catalyses a (7Z,10Z)-hexadecadienoyl-containing glycerolipid + 2 reduced [2Fe-2S]-[ferredoxin] + O2 + 2 H(+) = a (7Z,10Z,13Z)-hexadecatrienoyl-containing glycerolipid + 2 oxidized [2Fe-2S]-[ferredoxin] + 2 H2O. The catalysed reaction is a (9Z,12Z)-octadecadienoyl-containing glycerolipid + 2 reduced [2Fe-2S]-[ferredoxin] + O2 + 2 H(+) = (9Z,12Z,15Z)-octadecatrienoyl-containing glycerolipid + 2 oxidized [2Fe-2S]-[ferredoxin] + 2 H2O. It participates in lipid metabolism; polyunsaturated fatty acid biosynthesis. Chloroplast omega-3 fatty acid desaturase introduces the third double bond in the biosynthesis of 16:3 and 18:3 fatty acids, important constituents of plant membranes. It is thought to use ferredoxin as an electron donor and to act on fatty acids esterified to galactolipids, sulfolipids and phosphatidylglycerol. This Arabidopsis thaliana (Mouse-ear cress) protein is sn-2 acyl-lipid omega-3 desaturase (ferredoxin), chloroplastic.